Consider the following 1401-residue polypeptide: MMSCWFSCAPKNRQAADWNKYDDRLMRAAERGDVEKVSSILAKKGVNPGKLDVEGRSAFHVVASKGNLECLNAILIHGVDITTSDTAGRNALHLAAKYGHALCLQKLLQYNCPTEHVDLQGRTALHDAAMADCPSSIQLLCDHGASVNAKDVDGRTPLVLATQMCRPTICQLLIDRGADINSRDKQNRTALMLGCEYGCKDAVEVLIKNGADVTLLDALGHDSSYYARIGDNLDILTLLKTASENSNKGRELWKKGPSLQQRNLSQMLDEVNTKSNQREHQNIQDLEIENEDLKERLRKIQQEQRILLDKVNGLQLQLNEEVMVADDLESEKEKLKSLLAAKEKQHEESLRTIEALKSRFKYFESDHLGSGSHFRKEDMLLKQGQMYMTDSQCTSTGMPVHMQSRSMLRPLELALPNQASYSENEILKKELEAMRTFCDSAKQDRLKLQNELAHKVAECKALALECERVKEDSDEQIKQLEDALKDVQKRMYESEGKVKQMQTHFLALKEHLTSDAATGNHRLMEELKDQLKDMKVKYEGASAEVGKLRNQIKQNEMLVEEFKRDEGKLMEENKRLQKELSMCELEREKRGRKLTEMEGQLKDLSAKLALSIPAEKFENMKSLLSNELNEKAKKLIDVEREYERSLNETRPLKRELENLKAKLAQHVKPEEHEQLKSRLEQKSGELGKRITELTSKNQTLQKEIEKVCLDNKLLTQQVNNLTTEMKNHYVPLKVSEEMKKSHDVIVDDLNKKLSDVTHKYTEKKLEMEKLLMENASLSKNVSRLETVFIPPERHEKEMMALKSNITELKKQLSELNKKCGEDQEKIYSLMSENNDLKKTMSHQYVPVKTHEEIKTALSSTLDKTNRELVDVKKKCEDINQEFVKIKDENEILKRNLENTQNQVKAEYISLREHEEKMSGLRKSMKKVQDNSAEILAKYKKSQEEIVTLHEEIAAQKRELDTIQECIKLKYAPIISLEECERKFKATEKELKEQLSQQTQKYNTSEEEAKKCKQENDKLKKEILTLQKDLKDKNVHIENSYETERALSRKTEELNRQLKDLLQKYTEAKKEKEKLVEENAKQTSEILAAQTLLQKQHVPLEQVESLKKSLSGTIETLKEELKTKQRCYEKEQQTVTQLRQMLENQKNSSVPLAEHLQVKEAFEKEVGIIKASLREKEEESQNKTEEVSKLQSEIQNTKQALKKLETREVVDLSKYKATKSDLETQISDLNEKLANLNRKYEEVCEEVLHAKKKELSAKDEKELLHFSIEQEIKDQQERCDKSLTTITELQRRIQESAKQIEAKDNKITELLNDVERLKQALNGLSQLTYGSGSPSKRQSQLIDSLQQQVRSLQQQLADADRQHQEVIAIYRTHLLSAAQGHMDEDVQAALLQIIQMRQGLVC.

6 ANK repeats span residues 25–53 (LMRA…KLDV), 54–83 (EGRS…DITT), 87–116 (AGRN…PTEH), 120–149 (QGRT…SVNA), 153–182 (DGRT…DINS), and 186–215 (QNRT…DVTL). Ser-265 is subject to Phosphoserine. Coiled-coil stretches lie at residues 273–361 (TKSN…SRFK), 423–827 (ENEI…EKIY), and 856–1368 (ALSS…VIAI). Residue Lys-1020 forms a Glycyl lysine isopeptide (Lys-Gly) (interchain with G-Cter in SUMO2) linkage.

In terms of assembly, component of the apoptosome complex, composed of APAF1, pro-caspase-9 and UACA. In the complex, it probably interacts directly with APAF1. Interacts with LGALS3. Interacts with ARF6 and ACTB. Interacts with RAB39A. Highly expressed in muscle and heart, moderately in liver, kidney and pancreas, and weakly in placenta and lung.

The protein resides in the nucleus. Its subcellular location is the cytoplasm. The protein localises to the cytoskeleton. Its function is as follows. Regulates APAF1 expression and plays an important role in the regulation of stress-induced apoptosis. Promotes apoptosis by regulating three pathways, apoptosome up-regulation, LGALS3/galectin-3 down-regulation and NF-kappa-B inactivation. Regulates the redistribution of APAF1 into the nucleus after proapoptotic stress. Down-regulates the expression of LGALS3 by inhibiting NFKB1. Modulates isoactin dynamics to regulate the morphological alterations required for cell growth and motility. Interaction with ARF6 may modulate cell shape and motility after injury. May be involved in multiple neurite formation. The sequence is that of Uveal autoantigen with coiled-coil domains and ankyrin repeats protein (UACA) from Bos taurus (Bovine).